The following is a 196-amino-acid chain: Large ribosomal subunit protein uL14my (196 aa).

The transit peptide at 1–62 (MATALASKLS…TILKCVDNSC (62 aa)) directs the protein to the mitochondrion. Residues 148-175 (EKKGQNNSHGSKRKMEYNQPTGTRVFGP) are disordered.

This sequence belongs to the universal ribosomal protein uL14 family. As to quaternary structure, part of the mitochondrial 50S ribosomal subunit. As to expression, mostly expressed in pistils and inflorescences, including floral organs and meristems, and, to a lower extent, in leaves.

It localises to the mitochondrion. Binds to 23S rRNA in mitochondrion. Required for the formation of the proximal region of the ovule primordium during floral organogenesis, thus participating in patterning and growth of ovule. Also regulates the initiation and/or maintenance of integument and embryo sac ontogenesis. Prevents inappropriate cell death in the young ovule. This is Large ribosomal subunit protein uL14my (HLL) from Arabidopsis thaliana (Mouse-ear cress).